We begin with the raw amino-acid sequence, 441 residues long: 23S rRNA (uracil(1939)-C(5))-methyltransferase RlmD (441 aa).

The region spanning 1-56 (MSIDSLDMEARGVGRLLNEDGTPGKVIFVEGALPGETVSYRSFRRKPSYEQAHLVE) is the TRAM domain. Residues Cys69, Cys75, Cys78, and Cys157 each coordinate [4Fe-4S] cluster. Residues Gln265, Phe294, Asn299, Glu315, Asn343, and Asp364 each contribute to the S-adenosyl-L-methionine site. The active-site Nucleophile is Cys397.

It belongs to the class I-like SAM-binding methyltransferase superfamily. RNA M5U methyltransferase family. RlmD subfamily.

The catalysed reaction is uridine(1939) in 23S rRNA + S-adenosyl-L-methionine = 5-methyluridine(1939) in 23S rRNA + S-adenosyl-L-homocysteine + H(+). Its function is as follows. Catalyzes the formation of 5-methyl-uridine at position 1939 (m5U1939) in 23S rRNA. The polypeptide is 23S rRNA (uracil(1939)-C(5))-methyltransferase RlmD (Cupriavidus necator (strain ATCC 17699 / DSM 428 / KCTC 22496 / NCIMB 10442 / H16 / Stanier 337) (Ralstonia eutropha)).